The primary structure comprises 224 residues: Agamous-like MADS-box protein AGL9 homolog (224 aa).

The MADS-box domain occupies 3–57 (RGRVELKRIEGKINRQVTFAKRRNGLLKKAYELSVLCDAEVALIIFSNRGKLYEF). One can recognise a K-box domain in the interval 89–179 (EISSQQEYLK…KQRLMEGSQL (91 aa)).

As to expression, flower specific.

It is found in the nucleus. In terms of biological role, probable transcription factor active in inflorescence development and floral organogenesis. The protein is Agamous-like MADS-box protein AGL9 homolog (TDR5) of Solanum lycopersicum (Tomato).